The sequence spans 207 residues: Small ribosomal subunit protein uS3 (207 aa).

Positions 17–86 constitute a KH type-2 domain; it reads IDEYLEKELR…NPQIEVEEIK (70 aa).

Belongs to the universal ribosomal protein uS3 family. As to quaternary structure, part of the 30S ribosomal subunit.

Its function is as follows. Binds the lower part of the 30S subunit head. The polypeptide is Small ribosomal subunit protein uS3 (Thermococcus sibiricus (strain DSM 12597 / MM 739)).